A 377-amino-acid chain; its full sequence is MEASLSNHILNFSVDLYKRLKPSGKDTAGNVFCSPFSIAAALSMALAGARGNTAKQIAAILHSNDDKIHDHFSSFLCKLPSYAPDVALHIANRMYSEQTFHPKAEYTTLLQKSYDSTIKAVDFAGNADRVRLEVNAWVEEVTRSKIRDLLAPGTVDSSTSLILVNAIYFKGLWDSQFKPSATKPGDFHLTPQTSKKVDMMHQKGDFKMGHCSDLKVTALEIPYKGNKTSMVILLPEDVEGLSVLEEHLTAPKLSALLGGMYVTSDVNLRLPKFKLEQSIGLKDVLMAMGVKDFFTSLADLSGISAAGNLCASDIIHKAFVEVNEEGTEAAAATAIPIMLMCARFPQVVNFFVDRPFMFLIHSHDPDVVLFMGSIREL.

Residues asparagine 11 and asparagine 226 are each glycosylated (N-linked (GlcNAc...) asparagine).

This sequence belongs to the serpin family. In terms of tissue distribution, female saliva (at protein level). Female salivary gland (at protein level).

The protein localises to the secreted. Serine protease inhibitor with anticoagulant and immunosuppressive properties that can modulate blood feeding of ticks on vertebrate species. Strongly inhibits human leukocyte elastase (ELANE) and porcine pancreatic elastase. Moderately inhibits human tPA/tissue-type plasminogen activator (PLAT), coagulation factor Xa (F10), thrombin (F2) and trypsin. Does not inhibit human plasmin (PLG). Inhibits platelet aggregation. Inhibits the intrinsic pathway of blood coagulation in the host. Inhibits fibrinolysis in the host. Inhibits proliferation of mouse splenocytes. Decreases the number of IFN-gamma (IFNG)-producing human peripheral blood mononuclear cells (PBMCs) after stimulation with phytohemagglutinin A (PHA). Increases the number of IL10-producing human PBMCs after stimulation with lipopolysaccharides (LPS) with no significant effect on IL10 production. Inhibits production of IFNG, IL6, TNF-alpha (TNF) and CXCL8 by human PBMCs. Binds to monocyte/macrophage subpopulation of the host PBMCs. Increases both survival rate and survival time in mice with LPS-induced endotoxemic shock. The sequence is that of Iris from Ixodes ricinus (Common tick).